The primary structure comprises 179 residues: MRMEHIYKFQHWLFFIGLGVLLSLSLSVKANDFEGSNDRRSIALKARSFVSINENRTALSRKLLLSPDIGDGTNRIGQDCSKDDIVLFQGSTNPLPSGVPSYTVEIFNSCVSDCNIAEIHVSCGWFSSVRLVNPRVFRRLDYDDCLVNDGQPLGPGQSLSFQYANSFSYPLSVASVSCF.

The first 30 residues, 1–30 (MRMEHIYKFQHWLFFIGLGVLLSLSLSVKA), serve as a signal peptide directing secretion.

The chain is TPD1 protein homolog 1 from Arabidopsis thaliana (Mouse-ear cress).